The sequence spans 325 residues: DNA-directed RNA polymerase subunit alpha (325 aa).

Residues 1 to 238 (MSLKSLLKGF…EHLTVFINFE (238 aa)) form an alpha N-terminal domain (alpha-NTD) region. Residues 255-325 (LKASLSKHVE…LGLSFGMRDF (71 aa)) form an alpha C-terminal domain (alpha-CTD) region.

Belongs to the RNA polymerase alpha chain family. In terms of assembly, homodimer. The RNAP catalytic core consists of 2 alpha, 1 beta, 1 beta' and 1 omega subunit. When a sigma factor is associated with the core the holoenzyme is formed, which can initiate transcription.

It carries out the reaction RNA(n) + a ribonucleoside 5'-triphosphate = RNA(n+1) + diphosphate. DNA-dependent RNA polymerase catalyzes the transcription of DNA into RNA using the four ribonucleoside triphosphates as substrates. The chain is DNA-directed RNA polymerase subunit alpha from Leptospira interrogans serogroup Icterohaemorrhagiae serovar copenhageni (strain Fiocruz L1-130).